The following is a 571-amino-acid chain: Endonuclease/exonuclease/phosphatase family domain-containing protein 1 (571 aa).

The tract at residues 1-20 is disordered; sequence MGSTLGCHRSIPRDPSDLSH. The N-myristoyl glycine moiety is linked to residue G2. The segment covering 11–20 has biased composition (basic and acidic residues); that stretch reads IPRDPSDLSH. Phosphoserine is present on residues S16, S21, and S25. The 30-residue stretch at 38–67 folds into the HhH domain; it reads ERLNINTATEEELMTLPGVTRAVARSIVEY. Phosphoserine is present on residues S106, S110, S162, and S175. The segment at 202–227 is disordered; that stretch reads SRPPSTHTNGGLTFTAKPHPSPTSLS. The span at 204 to 213 shows a compositional bias: polar residues; sequence PPSTHTNGGL. Residue T267 is modified to Phosphothreonine. A Phosphoserine modification is found at S430. The disordered stretch occupies residues 548-571; it reads RKEGPRSGNGLTLERSEANIKHER. Positions 561–571 are enriched in basic and acidic residues; it reads ERSEANIKHER.

The protein is Endonuclease/exonuclease/phosphatase family domain-containing protein 1 (EEPD1) of Bos taurus (Bovine).